We begin with the raw amino-acid sequence, 288 residues long: Peroxisomal membrane protein pex13 (288 aa).

The interval 1-32 is disordered; sequence METNQNEKGPSLPSYPAGGIMSVSNSNADTNQ. Residues 22–32 are compositionally biased toward polar residues; that stretch reads SVSNSNADTNQ. Residues 178-198 traverse the membrane as a helical segment; the sequence is IYSIVSSLAIILGLVGLPYAI. The SH3 domain occupies 222–288; that stretch reads DSLEFCKADY…PSNYCSIISR (67 aa).

The protein belongs to the peroxin-13 family. As to quaternary structure, interacts (via SH3 domain) with PEX14 (via SH3-binding motif); forming the PEX13-PEX14 docking complex.

The protein resides in the peroxisome membrane. In terms of biological role, component of the PEX13-PEX14 docking complex, a translocon channel that specifically mediates the import of peroxisomal cargo proteins bound to PEX5 receptor. The PEX13-PEX14 docking complex forms a large import pore which can be opened to a diameter of about 9 nm. Mechanistically, PEX5 receptor along with cargo proteins associates with the PEX14 subunit of the PEX13-PEX14 docking complex in the cytosol, leading to the insertion of the receptor into the organelle membrane with the concomitant translocation of the cargo into the peroxisome matrix. The polypeptide is Peroxisomal membrane protein pex13 (pex13) (Schizosaccharomyces pombe (strain 972 / ATCC 24843) (Fission yeast)).